A 40-amino-acid chain; its full sequence is Photosystem II reaction center protein J (40 aa).

A helical transmembrane segment spans residues 8–28 (IPLCLIGTVAGIAVIGLVGVF).

Belongs to the PsbJ family. In terms of assembly, PSII is composed of 1 copy each of membrane proteins PsbA, PsbB, PsbC, PsbD, PsbE, PsbF, PsbH, PsbI, PsbJ, PsbK, PsbL, PsbM, PsbT, PsbX, PsbY, PsbZ, Psb30/Ycf12, at least 3 peripheral proteins of the oxygen-evolving complex and a large number of cofactors. It forms dimeric complexes.

The protein resides in the plastid. It localises to the chloroplast thylakoid membrane. Its function is as follows. One of the components of the core complex of photosystem II (PSII). PSII is a light-driven water:plastoquinone oxidoreductase that uses light energy to abstract electrons from H(2)O, generating O(2) and a proton gradient subsequently used for ATP formation. It consists of a core antenna complex that captures photons, and an electron transfer chain that converts photonic excitation into a charge separation. In Triticum aestivum (Wheat), this protein is Photosystem II reaction center protein J.